A 407-amino-acid polypeptide reads, in one-letter code: Putative glucose/galactose transporter (407 aa).

The next 12 helical transmembrane spans lie at 11–31, 47–67, 70–90, 96–116, 139–159, 180–200, 225–245, 263–283, 300–320, 321–341, 349–369, and 378–398; these read GSLT…DILI, LIQF…GNVI, IGYP…CALF, FGSY…IVCL, VQAF…LLIF, VQMP…IMYL, FVFG…IGSF, HYLV…SVLM, IVLI…ALTF, VGFF…LNLG, GVIS…GAVT, and NLLY…FFAL.

It belongs to the major facilitator superfamily. FHS transporter (TC 2.A.1.7) family.

The protein resides in the cell inner membrane. Functionally, intake of glucose and galactose. The protein is Putative glucose/galactose transporter (gluP) of Helicobacter pylori (strain ATCC 700392 / 26695) (Campylobacter pylori).